A 953-amino-acid chain; its full sequence is Kinesin-like protein KIF23 (953 aa).

The Nuclear localization signal signature appears at 7 to 11 (KTVRK). Residues 25-436 (PVGVYCRVRP…MRFAEVTQEV (412 aa)) form the Kinesin motor domain. Position 112-119 (112-119 (GVTGSGKT)) interacts with ATP. Phosphoserine occurs at positions 155 and 160. The stretch at 542–618 (QEKLNEREKV…RRLEARLQGM (77 aa)) forms a coiled coil. Glycyl lysine isopeptide (Lys-Gly) (interchain with G-Cter in SUMO2) cross-links involve residues Lys-572 and Lys-587. Phosphoserine is present on Ser-606. Residues Lys-625, Lys-648, Lys-663, and Lys-666 each participate in a glycyl lysine isopeptide (Lys-Gly) (interchain with G-Cter in SUMO2) cross-link. A disordered region spans residues 658 to 695 (IVTEPKPEKPERPSRERDREKIIPRSVSPSPLPLSSNN). Residues 662-680 (PKPEKPERPSRERDREKII) show a composition bias toward basic and acidic residues. The span at 681–693 (PRSVSPSPLPLSS) shows a compositional bias: low complexity. Phosphoserine occurs at positions 683 and 685. Phosphothreonine is present on Thr-739. Ser-807 bears the Phosphoserine mark. Residues Lys-816 and Lys-847 each participate in a glycyl lysine isopeptide (Lys-Gly) (interchain with G-Cter in SUMO2) cross-link. Ser-860 is subject to Phosphoserine. Residues Lys-867, Lys-870, and Lys-892 each participate in a glycyl lysine isopeptide (Lys-Gly) (interchain with G-Cter in SUMO2) cross-link. 2 disordered regions span residues 894 to 921 (ELPT…EWTD) and 934 to 953 (AGSQ…RKKP). Ser-904 is subject to Phosphoserine. Thr-920 carries the post-translational modification Phosphothreonine. Residue Lys-949 forms a Glycyl lysine isopeptide (Lys-Gly) (interchain with G-Cter in SUMO2) linkage.

Belongs to the TRAFAC class myosin-kinesin ATPase superfamily. Kinesin family. In terms of assembly, heterotetramer of two molecules each of RACGAP1 and KIF23. Found in the centralspindlin complex. Interacts with RACGAP1; the interaction is direct. Interacts with ECT2 and PRC1. Interacts with ANXA11 during cytokinesis. Interacts with BIRC6/bruce and USP8/UBPY. Interacts with ARF6, forming heterodimers and heterotetramers. Ubiquitinated. Deubiquitinated by USP8/UBPY. In terms of tissue distribution, detected in testis and ovary from newborn mice (at protein level). Detected in brain, spinal cord and small intestine.

Its subcellular location is the nucleus. The protein resides in the cytoplasm. It is found in the cytoskeleton. The protein localises to the spindle. It localises to the midbody. Its subcellular location is the midbody ring. Component of the centralspindlin complex that serves as a microtubule-dependent and Rho-mediated signaling required for the myosin contractile ring formation during the cell cycle cytokinesis. Essential for cytokinesis in Rho-mediated signaling. Required for the localization of ECT2 to the central spindle. Plus-end-directed motor enzyme that moves antiparallel microtubules in vitro. This chain is Kinesin-like protein KIF23 (Kif23), found in Mus musculus (Mouse).